The following is a 298-amino-acid chain: ATP synthase gamma chain (298 aa).

The protein belongs to the ATPase gamma chain family. F-type ATPases have 2 components, CF(1) - the catalytic core - and CF(0) - the membrane proton channel. CF(1) has five subunits: alpha(3), beta(3), gamma(1), delta(1), epsilon(1). CF(0) has three main subunits: a, b and c.

The protein resides in the cell inner membrane. Its function is as follows. Produces ATP from ADP in the presence of a proton gradient across the membrane. The gamma chain is believed to be important in regulating ATPase activity and the flow of protons through the CF(0) complex. The polypeptide is ATP synthase gamma chain (Acidithiobacillus ferridurans).